A 374-amino-acid chain; its full sequence is All-trans-retinol dehydrogenase [NAD(+)] ADH7 (374 aa).

Cys47, His68, Cys98, Cys101, Cys104, Cys112, and Cys174 together coordinate Zn(2+). NAD(+) is bound by residues Gly199 to Gly204, Asp223, Lys228, Val292 to Ala294, and Arg369.

The protein belongs to the zinc-containing alcohol dehydrogenase family. Class-IV subfamily. In terms of assembly, homodimer. Requires Zn(2+) as cofactor. In terms of tissue distribution, high expression in the stomach mucosa. Lower expression in eye, thymus, skin and ovary. Very low expression in small intestine, liver and uterus.

The protein localises to the cytoplasm. The catalysed reaction is a primary alcohol + NAD(+) = an aldehyde + NADH + H(+). It catalyses the reaction 10-hydroxydecanoate + NAD(+) = 10-oxodecanoate + NADH + H(+). The enzyme catalyses all-trans-retinol + NAD(+) = all-trans-retinal + NADH + H(+). It carries out the reaction 9-cis-retinol + NAD(+) = 9-cis-retinal + NADH + H(+). The catalysed reaction is all-trans-3,4-didehydroretinol + NAD(+) = all-trans-3,4-didehydroretinal + NADH + H(+). It catalyses the reaction all-trans-4-hydroxyretinol + NAD(+) = all-trans-4-hydroxyretinal + NADH + H(+). The enzyme catalyses all-trans-4-oxoretinol + NAD(+) = all-trans-4-oxoretinal + NADH + H(+). It carries out the reaction 12-hydroxydodecanoate + NAD(+) = 12-oxododecanoate + NADH + H(+). The catalysed reaction is 16-hydroxyhexadecanoate + NAD(+) = 16-oxohexadecanoate + NADH + H(+). It catalyses the reaction hexan-1-ol + NAD(+) = hexanal + NADH + H(+). The enzyme catalyses (E)-hex-2-en-1-ol + NAD(+) = (E)-hex-2-enal + NADH + H(+). It carries out the reaction (E)-4-hydroxynon-2-en-1-ol + NAD(+) = (E)-4-hydroxynon-2-enal + NADH + H(+). With respect to regulation, retinol oxidation is inhibited by the detergent Tween 80. Ethanol inhibits both all-trans-retinol and 9-cis-retinol oxidation. 13-cis-retinol is an effective competitive inhibitor of the 9-cis-retinol oxidation. All-trans-retinoic acid is a powerful inhibitor of all-trans-retinol oxidation. 13-cis-retinoic acid is a powerful inhibitor of all-trans-retinol oxidation. Cimetidine competitively inhibited ethanol oxidation. Its function is as follows. Catalyzes the NAD-dependent oxidation of all-trans-retinol, alcohol, aldehyde and omega-hydroxy fatty acids and their derivatives. Oxidizes preferentially all trans-retinol, all-trans-4-hydroxyretinol, 9-cis-retinol, 2-hexenol, and long chain omega-hydroxy fatty acids such as juniperic acid. In vitro can also catalyze the NADH-dependent reduction of all-trans-retinal and aldehydes and their derivatives. Reduces preferentially all trans-retinal, all-trans-4-oxoretinal and hexanal. Catalyzes in the oxidative direction with higher efficiency. Therefore may participate in retinoid metabolism, fatty acid omega-oxidation, and elimination of cytotoxic aldehydes produced by lipid peroxidation. The protein is All-trans-retinol dehydrogenase [NAD(+)] ADH7 (Adh7) of Mus musculus (Mouse).